A 453-amino-acid polypeptide reads, in one-letter code: tRNA modification GTPase MnmE (453 aa).

(6S)-5-formyl-5,6,7,8-tetrahydrofolate contacts are provided by R22, E79, and K119. Residues 215 to 376 (GMKVVIAGRP…LRQHLKECMG (162 aa)) enclose the TrmE-type G domain. Position 225 (N225) interacts with K(+). GTP-binding positions include 225 to 230 (NAGKSS), 244 to 250 (TDIAGTT), 269 to 272 (DTAG), and 334 to 337 (NKAD). S229 serves as a coordination point for Mg(2+). 3 residues coordinate K(+): T244, I246, and T249. T250 is a Mg(2+) binding site. K453 contacts (6S)-5-formyl-5,6,7,8-tetrahydrofolate.

The protein belongs to the TRAFAC class TrmE-Era-EngA-EngB-Septin-like GTPase superfamily. TrmE GTPase family. In terms of assembly, homodimer. Heterotetramer of two MnmE and two MnmG subunits. K(+) serves as cofactor.

It localises to the cytoplasm. Functionally, exhibits a very high intrinsic GTPase hydrolysis rate. Involved in the addition of a carboxymethylaminomethyl (cmnm) group at the wobble position (U34) of certain tRNAs, forming tRNA-cmnm(5)s(2)U34. The sequence is that of tRNA modification GTPase MnmE from Vibrio cholerae serotype O1 (strain ATCC 39315 / El Tor Inaba N16961).